A 284-amino-acid chain; its full sequence is Nucleotide-binding protein SO_3964 (284 aa).

An ATP-binding site is contributed by 8–15; it reads GRSGSGKS. A GTP-binding site is contributed by 56-59; the sequence is DVRN.

The protein belongs to the RapZ-like family.

Functionally, displays ATPase and GTPase activities. The chain is Nucleotide-binding protein SO_3964 from Shewanella oneidensis (strain ATCC 700550 / JCM 31522 / CIP 106686 / LMG 19005 / NCIMB 14063 / MR-1).